Reading from the N-terminus, the 453-residue chain is MGRGMSRPAPKSFHVKSFGCQMNVYDGARMAELLEAQGMHAADSADAADLVVLNTCHIREKAAEKVYSDIGRIVKKAADAEEGRARPMIAVAGCVAQAEGPEIPRRAPAVDIVVGPQAYHNLPQLVADAAEGRRALDTDMPAASKFDTLPKRRRQGPTAFLTVQEGCDKFCTYCVVPYTRGAEISRPWGAIVDEAKALVDAGAREITLLGQNVNAWTGEDDRGRTQGLDGLIRALDALPGLARIRYTTSHPNDMSDGLIAAHGEVAKLMPFLHLPVQAGSDRILKAMNRSHDAAGYLRLIERVRAARPDIAVSGDFIVGFPGETDEDFEATLAIVRAVDHAQAFSFKYSPRPGTPAASMDGQVAPAVMDERLQRLQALLNEQQHRFNLATVGKRCEVLIERDGKKPGQRIGKSPWLQSVIVEDGPAIGTLVTVDIVSAGPNSLSGALVEQKAA.

In terms of domain architecture, MTTase N-terminal spans 11 to 131; the sequence is KSFHVKSFGC…LPQLVADAAE (121 aa). Residues Cys-20, Cys-56, Cys-94, Cys-167, Cys-171, and Cys-174 each coordinate [4Fe-4S] cluster. In terms of domain architecture, Radical SAM core spans 153–385; it reads RRQGPTAFLT…QALLNEQQHR (233 aa). Positions 388–449 constitute a TRAM domain; it reads LATVGKRCEV…PNSLSGALVE (62 aa).

The protein belongs to the methylthiotransferase family. MiaB subfamily. In terms of assembly, monomer. [4Fe-4S] cluster serves as cofactor.

It localises to the cytoplasm. The catalysed reaction is N(6)-dimethylallyladenosine(37) in tRNA + (sulfur carrier)-SH + AH2 + 2 S-adenosyl-L-methionine = 2-methylsulfanyl-N(6)-dimethylallyladenosine(37) in tRNA + (sulfur carrier)-H + 5'-deoxyadenosine + L-methionine + A + S-adenosyl-L-homocysteine + 2 H(+). Catalyzes the methylthiolation of N6-(dimethylallyl)adenosine (i(6)A), leading to the formation of 2-methylthio-N6-(dimethylallyl)adenosine (ms(2)i(6)A) at position 37 in tRNAs that read codons beginning with uridine. This chain is tRNA-2-methylthio-N(6)-dimethylallyladenosine synthase, found in Rhizorhabdus wittichii (strain DSM 6014 / CCUG 31198 / JCM 15750 / NBRC 105917 / EY 4224 / RW1) (Sphingomonas wittichii).